The sequence spans 72 residues: Conotoxin LiC53 (72 aa).

The first 23 residues, 1 to 23, serve as a signal peptide directing secretion; it reads MEKLTSLLLVAALLMLTQTLIQG. The propeptide occupies 24–41; the sequence is GGEDRPNKKFLQKIKSTA. Disulfide bonds link Cys45–Cys59, Cys52–Cys63, and Cys58–Cys68.

This sequence belongs to the conotoxin O2 superfamily. As to expression, expressed by the venom duct.

It is found in the secreted. The polypeptide is Conotoxin LiC53 (Conus lividus (Livid cone)).